Consider the following 92-residue polypeptide: Small ribosomal subunit protein uS19 (92 aa).

Belongs to the universal ribosomal protein uS19 family.

Functionally, protein S19 forms a complex with S13 that binds strongly to the 16S ribosomal RNA. The chain is Small ribosomal subunit protein uS19 from Enterococcus faecalis (strain ATCC 700802 / V583).